Consider the following 347-residue polypeptide: WAT1-related protein At4g15540 (347 aa).

A run of 10 helical transmembrane segments spans residues 15-35, 47-67, 73-93, 108-128, 139-159, 178-198, 210-230, 243-263, 276-296, and 299-319; these read VVPF…SILY, VFVF…SLIF, LPTA…LGLT, TLSS…AIFF, ATQA…VIVL, WIIG…WFIL, IAVV…VCLL, GFSL…GSVI, ISLF…IFLG, and LHLG…TVIW. The EamA 1 domain occupies 30–158; that stretch reads GSSILYKAAT…VSISGALVIV (129 aa). An EamA 2 domain is found at 216 to 317; the sequence is YNLCATLISG…VILSFGFYTV (102 aa).

It belongs to the drug/metabolite transporter (DMT) superfamily. Plant drug/metabolite exporter (P-DME) (TC 2.A.7.4) family.

It localises to the membrane. This chain is WAT1-related protein At4g15540, found in Arabidopsis thaliana (Mouse-ear cress).